The chain runs to 65 residues: MGMRMMFTVFLLVVLATTVVSFTSDRASDGRKAAAKDKASDLVALTVKGCCSHPACSVNNPDICG.

Positions 1-21 (MGMRMMFTVFLLVVLATTVVS) are cleaved as a signal peptide. The propeptide occupies 22–48 (FTSDRASDGRKAAAKDKASDLVALTVK). 2 cysteine pairs are disulfide-bonded: cysteine 50–cysteine 56 and cysteine 51–cysteine 64. The tract at residues 52-54 (SHP) is ser-Xaa-Pro motif, crucial for potent interaction with nAChR. Cysteine 64 carries the post-translational modification Cysteine amide.

It belongs to the conotoxin A superfamily. As to expression, expressed by the venom duct.

The protein resides in the secreted. Its function is as follows. Alpha-conotoxins act on postsynaptic membranes, they bind to the nicotinic acetylcholine receptors (nAChR) and thus inhibit them. This toxin potently and reversibly inhibits alpha-9-alpha-10/CHRNA9-CHRNA10 (IC(50)=92 nM (human) and IC(50)=8.3 nM (rat)) and human alpha3-beta-2/CHRNA3-CHRNB2 nAChR (IC(50)=218.9 nM). Also moderately inhibits human alpha-3-beta-4/CHRNA3-CHRNB4 (60% inhibition at 1 uM), rat alpha-7/CHRNA7 (65% inhibition at 1 uM) and rat alpha-3-beta-2/CHRNA3-CHRNB2 nAChR (50-70% inhibition at 10 uM). In two rat pain models, this toxin shows analgesic effect. In Conus marmoreus (Marble cone), this protein is Alpha-conotoxin Mr1.1.